A 67-amino-acid chain; its full sequence is Conotoxin Cp1.1 (67 aa).

Positions Met-1–Thr-26 are cleaved as a signal peptide. Cystine bridges form between Cys-29–Cys-43, Cys-36–Cys-48, Cys-42–Cys-52, and Cys-47–Cys-56. Tyrosine amide is present on Tyr-60. The propeptide occupies Ala-64–Gln-67.

The protein belongs to the conotoxin I2 superfamily. As to expression, expressed by the venom duct.

It localises to the secreted. This Conus capitaneus (Captain cone) protein is Conotoxin Cp1.1.